The chain runs to 103 residues: Large ribosomal subunit protein bL21 (103 aa).

It belongs to the bacterial ribosomal protein bL21 family. Part of the 50S ribosomal subunit. Contacts protein L20.

Its function is as follows. This protein binds to 23S rRNA in the presence of protein L20. This chain is Large ribosomal subunit protein bL21, found in Tolumonas auensis (strain DSM 9187 / NBRC 110442 / TA 4).